The primary structure comprises 174 residues: Protein PopB (174 aa).

The interval 1–174 (MSHSKIKAGG…EAMKIKDDDD (174 aa)) is disordered. Residues 50–65 (LNKSNLGSDSQTWTPG) are compositionally biased toward polar residues. The segment covering 66-78 (STMVSLKSRSSSS) has biased composition (low complexity). Over residues 79–89 (HKPDTGGDTKP) the composition is skewed to basic and acidic residues. Low complexity predominate over residues 147 to 161 (IALQRAIQRQTQTRQ). Basic and acidic residues predominate over residues 162–174 (KMQEAMKIKDDDD).

Its subcellular location is the secreted. In terms of biological role, probably involved in host-pathogen interactions. The chain is Protein PopB (popB) from Ralstonia nicotianae (strain ATCC BAA-1114 / GMI1000) (Ralstonia solanacearum).